Consider the following 173-residue polypeptide: Monothiol glutaredoxin-S14, chloroplastic (173 aa).

A chloroplast-targeting transit peptide spans 1 to 63; it reads MALRSVKTPT…KLKPTKFRCS (63 aa). One can recognise a Glutaredoxin domain in the interval 72 to 173; sequence KDTLEKLVNS…QEEVEKAMCS (102 aa). Lys89 contacts glutathione. Residues Cys97 and Phe99 each contribute to the [2Fe-2S] cluster site. Cys97 bears the S-glutathionyl cysteine mark. The required for CAX1 activation stretch occupies residues 97-100; sequence CGFS. The glutathione site is built by Arg126 and Lys130. Positions 133 to 137 are required for CAX1 activation; the sequence is SNWPT. Glutathione contacts are provided by residues Phe138 and 151–152; that span reads CD.

This sequence belongs to the glutaredoxin family. CGFS subfamily. As to quaternary structure, [2Fe-2S]-bridged holo-homodimer. Interacts with N-terminal part of CAX1 in yeast. Interacts in vitro with SUFE1, BOLA1, BOLA2 and BOLA4. Interacts in vivo only with SUFE1, BOLA1 and BOLA4. Interacts with SBP1. As to expression, highly expressed in leaves, at intermediate levels in stems and at lower levels in roots and flowers.

The protein localises to the plastid. The protein resides in the chloroplast. In terms of biological role, may only reduce GSH-thiol disulfides, but not protein disulfides (Potential). Probably involved in the regulation of the redox state of the BOLA proteins (Potential). May act as Fe-S cluster donors to Fe-S cluster-requiring proteins. May protect cells against protein oxidative damage. May regulate CAX cation transporters. The GRXS14-BOLA1 heterodimer binds a labile, oxygen sensitive Fe-S cluster. The chain is Monothiol glutaredoxin-S14, chloroplastic from Arabidopsis thaliana (Mouse-ear cress).